The sequence spans 212 residues: Thymidylate kinase (212 aa).

Residue 10–17 (GPEGAGKT) coordinates ATP.

The protein belongs to the thymidylate kinase family.

The enzyme catalyses dTMP + ATP = dTDP + ADP. Functionally, phosphorylation of dTMP to form dTDP in both de novo and salvage pathways of dTTP synthesis. The sequence is that of Thymidylate kinase from Bacillus pumilus (strain SAFR-032).